The chain runs to 1292 residues: HMG domain-containing protein 3 (1292 aa).

The segment at residues 42–110 (TKKPRSAYLL…GLDPNSKLSA (69 aa)) is a DNA-binding region (HMG box). Disordered stretches follow at residues 363 to 391 (SKGSVVKRNQQPVTTEQNSSKENASKLTL), 448 to 505 (VQPE…GRAR), and 562 to 588 (KQLGQPIQQPSGPGEVKLPSGPSNRTS). The segment covering 370–391 (RNQQPVTTEQNSSKENASKLTL) has biased composition (polar residues). The segment covering 467-478 (PTPSEGTSTSSP) has biased composition (low complexity). The segment covering 562–572 (KQLGQPIQQPS) has biased composition (polar residues).

Its subcellular location is the nucleus. In Homo sapiens (Human), this protein is HMG domain-containing protein 3.